Consider the following 353-residue polypeptide: NADH-ubiquinone oxidoreductase chain 2 (353 aa).

A run of 8 helical transmembrane segments spans residues 4 to 24 (SVVL…LSSH), 60 to 80 (FLVQ…QLWL), 96 to 116 (IVLT…FWFP), 139 to 159 (FIIL…TLGC), 198 to 218 (IYVG…VFLI), 241 to 261 (GNVL…TGFL), 274 to 294 (NLLV…FFYL), and 330 to 350 (VLLS…PALW).

This sequence belongs to the complex I subunit 2 family.

The protein localises to the mitochondrion inner membrane. It carries out the reaction a ubiquinone + NADH + 5 H(+)(in) = a ubiquinol + NAD(+) + 4 H(+)(out). Core subunit of the mitochondrial membrane respiratory chain NADH dehydrogenase (Complex I) that is believed to belong to the minimal assembly required for catalysis. Complex I functions in the transfer of electrons from NADH to the respiratory chain. The immediate electron acceptor for the enzyme is believed to be ubiquinone. The protein is NADH-ubiquinone oxidoreductase chain 2 (ND2) of Pisaster ochraceus (Ochre sea star).